We begin with the raw amino-acid sequence, 208 residues long: Pyridoxal 5'-phosphate synthase subunit PdxT (208 aa).

An L-glutamine-binding site is contributed by 46–48 (GES). The active-site Nucleophile is Cys-78. L-glutamine-binding positions include Arg-105 and 156–157 (IR). Catalysis depends on charge relay system residues His-192 and Glu-194.

Belongs to the glutaminase PdxT/SNO family. In the presence of PdxS, forms a dodecamer of heterodimers. Only shows activity in the heterodimer.

The enzyme catalyses aldehydo-D-ribose 5-phosphate + D-glyceraldehyde 3-phosphate + L-glutamine = pyridoxal 5'-phosphate + L-glutamate + phosphate + 3 H2O + H(+). The catalysed reaction is L-glutamine + H2O = L-glutamate + NH4(+). It participates in cofactor biosynthesis; pyridoxal 5'-phosphate biosynthesis. Functionally, catalyzes the hydrolysis of glutamine to glutamate and ammonia as part of the biosynthesis of pyridoxal 5'-phosphate. The resulting ammonia molecule is channeled to the active site of PdxS. The protein is Pyridoxal 5'-phosphate synthase subunit PdxT of Bifidobacterium adolescentis (strain ATCC 15703 / DSM 20083 / NCTC 11814 / E194a).